The primary structure comprises 178 residues: Adenine phosphoribosyltransferase (178 aa).

It belongs to the purine/pyrimidine phosphoribosyltransferase family. In terms of assembly, homodimer.

It is found in the cytoplasm. It catalyses the reaction AMP + diphosphate = 5-phospho-alpha-D-ribose 1-diphosphate + adenine. The protein operates within purine metabolism; AMP biosynthesis via salvage pathway; AMP from adenine: step 1/1. Functionally, catalyzes a salvage reaction resulting in the formation of AMP, that is energically less costly than de novo synthesis. The sequence is that of Adenine phosphoribosyltransferase from Cereibacter sphaeroides (strain ATCC 17023 / DSM 158 / JCM 6121 / CCUG 31486 / LMG 2827 / NBRC 12203 / NCIMB 8253 / ATH 2.4.1.) (Rhodobacter sphaeroides).